We begin with the raw amino-acid sequence, 575 residues long: Golgi-associated kinase 1A (575 aa).

The first 29 residues, 1–29, serve as a signal peptide directing secretion; it reads MASWLRRKLRGKRRPVIAFCLLMILSAMA. Positions 30–119 are cleaved as a propeptide — removed in mature form; the sequence is VTRFPPQRPS…GDLRHPGRVR (90 aa). The O-glycosylated at one site stretch occupies residues 53–58; that stretch reads TGAPAT. Residues 143 to 153 are compositionally biased toward basic and acidic residues; that stretch reads VGDPGTKDLGH. Residues 143–162 are disordered; it reads VGDPGTKDLGHPQHGSPIQE. Residues 437 to 575 constitute a propeptide, removed in mature form; that stretch reads RYCCGFEPEP…NLTLFRDEDP (139 aa). Asn566 carries an N-linked (GlcNAc...) asparagine glycan.

It belongs to the GASK family. In terms of processing, O-glycosylated with core 1 or possibly core 8 glycans. Post-translationally, proteolytically cleaved. Cleaved at Arg-120 and Arg-437 leading to a processed mature product of 35 kDa. The cleavage takes place in the Golgi apparatus. As to expression, expressed in skin, lung and colon (at protein level).

It localises to the secreted. The protein resides in the endoplasmic reticulum. Its subcellular location is the golgi apparatus. The protein localises to the membrane. It is found in the caveola. This is Golgi-associated kinase 1A from Homo sapiens (Human).